Consider the following 240-residue polypeptide: tRNA (guanine-N(7)-)-methyltransferase (240 aa).

The tract at residues 1-20 is disordered; the sequence is MTESHDTPITPDGEARPHRR. S-adenosyl-L-methionine-binding residues include E70, E95, D122, and D145. Residue D145 is part of the active site. Substrate is bound by residues K149, D181, and 218–221; that span reads TKFE.

The protein belongs to the class I-like SAM-binding methyltransferase superfamily. TrmB family.

It carries out the reaction guanosine(46) in tRNA + S-adenosyl-L-methionine = N(7)-methylguanosine(46) in tRNA + S-adenosyl-L-homocysteine. The protein operates within tRNA modification; N(7)-methylguanine-tRNA biosynthesis. Its function is as follows. Catalyzes the formation of N(7)-methylguanine at position 46 (m7G46) in tRNA. The protein is tRNA (guanine-N(7)-)-methyltransferase of Pseudomonas putida (strain ATCC 47054 / DSM 6125 / CFBP 8728 / NCIMB 11950 / KT2440).